The following is a 71-amino-acid chain: Biotinylated protein TB7.3 (71 aa).

In terms of domain architecture, Biotinyl-binding spans 2 to 71 (AEDVRAEIVA…QAGDLIAVIS (70 aa)). Position 37 is an N6-biotinyllysine (lysine 37).

The polypeptide is Biotinylated protein TB7.3 (Mycobacterium bovis (strain ATCC BAA-935 / AF2122/97)).